We begin with the raw amino-acid sequence, 87 residues long: U3-theraphotoxin-Hhn1h (87 aa).

The N-terminal stretch at 1–24 (MVNMKASMFLTFAGLVLLFVVCYA) is a signal peptide. Positions 25 to 52 (SESEEKEFPKEMLSSIFAVDNDSKQEER) are excised as a propeptide. Cystine bridges form between Cys-54–Cys-67, Cys-61–Cys-72, and Cys-66–Cys-79.

This sequence belongs to the neurotoxin 10 (Hwtx-1) family. 51 (Hntx-8) subfamily. Hntx-8 sub-subfamily. In terms of tissue distribution, expressed by the venom gland.

Its subcellular location is the secreted. Its function is as follows. Ion channel inhibitor. In Cyriopagopus hainanus (Chinese bird spider), this protein is U3-theraphotoxin-Hhn1h.